The primary structure comprises 466 residues: Histone acetyltransferase type B catalytic subunit DDB_G0275159 (466 aa).

Positions 169 to 366 constitute an N-acetyltransferase domain; the sequence is AVFRYHEKLQ…FRIAIKKRLY (198 aa). Acetyl-CoA contacts are provided by residues 240-242 and 247-253; these read YLI and QRMGHGK. Glu279 serves as the catalytic Proton donor/acceptor. Residues 372-459 are a coiled coil; sequence DSEQIEKMKQ…LEENYHKTLS (88 aa).

This sequence belongs to the HAT1 family.

It catalyses the reaction L-lysyl-[protein] + acetyl-CoA = N(6)-acetyl-L-lysyl-[protein] + CoA + H(+). The sequence is that of Histone acetyltransferase type B catalytic subunit DDB_G0275159 from Dictyostelium discoideum (Social amoeba).